Here is a 435-residue protein sequence, read N- to C-terminus: Methylenetetrahydrofolate--tRNA-(uracil-5-)-methyltransferase TrmFO (435 aa).

An FAD-binding site is contributed by 10–15 (GAGLAG).

It belongs to the MnmG family. TrmFO subfamily. The cofactor is FAD.

It is found in the cytoplasm. It carries out the reaction uridine(54) in tRNA + (6R)-5,10-methylene-5,6,7,8-tetrahydrofolate + NADH + H(+) = 5-methyluridine(54) in tRNA + (6S)-5,6,7,8-tetrahydrofolate + NAD(+). The catalysed reaction is uridine(54) in tRNA + (6R)-5,10-methylene-5,6,7,8-tetrahydrofolate + NADPH + H(+) = 5-methyluridine(54) in tRNA + (6S)-5,6,7,8-tetrahydrofolate + NADP(+). Its function is as follows. Catalyzes the folate-dependent formation of 5-methyl-uridine at position 54 (M-5-U54) in all tRNAs. The protein is Methylenetetrahydrofolate--tRNA-(uracil-5-)-methyltransferase TrmFO of Bacillus velezensis (strain DSM 23117 / BGSC 10A6 / LMG 26770 / FZB42) (Bacillus amyloliquefaciens subsp. plantarum).